The following is a 215-amino-acid chain: NAD(P)H-hydrate epimerase (215 aa).

Residues 8–212 (MYNIENKGHD…KIGIPPEAEE (205 aa)) form the YjeF N-terminal domain. 57 to 61 (NNGGD) serves as a coordination point for (6S)-NADPHX. Positions 58 and 124 each coordinate K(+). Residues 128-134 (GTGISGE), tyrosine 139, and aspartate 157 contribute to the (6S)-NADPHX site. Position 160 (serine 160) interacts with K(+).

The protein belongs to the NnrE/AIBP family. It depends on K(+) as a cofactor.

The enzyme catalyses (6R)-NADHX = (6S)-NADHX. It carries out the reaction (6R)-NADPHX = (6S)-NADPHX. Catalyzes the epimerization of the S- and R-forms of NAD(P)HX, a damaged form of NAD(P)H that is a result of enzymatic or heat-dependent hydration. This is a prerequisite for the S-specific NAD(P)H-hydrate dehydratase to allow the repair of both epimers of NAD(P)HX. In Nitrosopumilus maritimus (strain SCM1), this protein is NAD(P)H-hydrate epimerase.